A 140-amino-acid polypeptide reads, in one-letter code: Nucleoside diphosphate kinase (140 aa).

Residues K11, F59, R87, T93, R104, and N114 each contribute to the ATP site. Residue H117 is the Pros-phosphohistidine intermediate of the active site.

This sequence belongs to the NDK family. As to quaternary structure, homotetramer. Mg(2+) serves as cofactor.

The protein localises to the cytoplasm. The catalysed reaction is a 2'-deoxyribonucleoside 5'-diphosphate + ATP = a 2'-deoxyribonucleoside 5'-triphosphate + ADP. It catalyses the reaction a ribonucleoside 5'-diphosphate + ATP = a ribonucleoside 5'-triphosphate + ADP. In terms of biological role, major role in the synthesis of nucleoside triphosphates other than ATP. The ATP gamma phosphate is transferred to the NDP beta phosphate via a ping-pong mechanism, using a phosphorylated active-site intermediate. The sequence is that of Nucleoside diphosphate kinase from Rhodopseudomonas palustris (strain BisB5).